The sequence spans 516 residues: Rho guanine nucleotide exchange factor 9 (516 aa).

Residues 8-67 enclose the SH3 domain; that stretch reads DSIVSAEAVWDHVTMANRELAFKAGDVIKVLDASNKDWWWGQIDDEEGWFPASFVRLWVN. Residues 100-110 are interaction with GPHN; the sequence is RDQMRANVINE. Residues 103–287 form the DH domain; sequence MRANVINEIM…RNVTQQINER (185 aa). One can recognise a PH domain in the interval 318 to 425; the sequence is ELIYTGEMAW…WLRAFREERK (108 aa). The segment at 450–480 is disordered; it reads RKASKQKGVNSARSVPPSYPPPQDPLNQGQY. Phosphoserine is present on Ser502.

As to quaternary structure, interacts with GPHN. Detected in embryonic and adult brain.

Its subcellular location is the cytoplasm. The protein resides in the postsynaptic density. Its function is as follows. Acts as a guanine nucleotide exchange factor (GEF) for CDC42. Promotes formation of GPHN clusters. The protein is Rho guanine nucleotide exchange factor 9 (Arhgef9) of Mus musculus (Mouse).